The following is a 2080-amino-acid chain: Dedicator of cytokinesis protein 6 (2080 aa).

Residues 20–31 are compositionally biased toward basic and acidic residues; that stretch reads EVRKQVSRERSG. Disordered stretches follow at residues 20-44, 156-189, and 408-441; these read EVRK…SSLG, QDTP…SGAS, and PQDR…GDDA. A compositionally biased stretch (low complexity) spans 32–42; it reads SPHSSRRSSSS. Ser178 is subject to Phosphoserine. Residues 408 to 425 are compositionally biased toward basic and acidic residues; that stretch reads PQDRDSDSEGERRPTWAE. In terms of domain architecture, C2 DOCK-type spans 546 to 712; sequence RNLLFVYPHS…GVFSVELTAV (167 aa). Arg863 bears the Omega-N-methylarginine mark. A phosphoserine mark is found at Ser870, Ser878, and Ser882. The tract at residues 1101 to 1123 is disordered; it reads ASPSPSVSSTTSQSSTFSSQAPD. Residues 1104–1122 show a composition bias toward low complexity; it reads SPSVSSTTSQSSTFSSQAP. Residue Ser1341 is modified to Phosphoserine. The 437-residue stretch at 1620–2056 folds into the DOCKER domain; that stretch reads RGYQGSPDLR…LQPLLTQRLP (437 aa). A Phosphothreonine modification is found at Thr2064. Phosphoserine occurs at positions 2065 and 2069.

This sequence belongs to the DOCK family. Widely expressed with highest levels in lung and heart.

The protein localises to the cytoplasm. Its subcellular location is the perinuclear region. In terms of biological role, acts as a guanine nucleotide exchange factor (GEF) for CDC42 and RAC1 small GTPases. Through its activation of CDC42 and RAC1, regulates neurite outgrowth in an vitro differentiation system. This is Dedicator of cytokinesis protein 6 (Dock6) from Mus musculus (Mouse).